Reading from the N-terminus, the 325-residue chain is Hydroxymethylglutaryl-CoA lyase, mitochondrial (325 aa).

The transit peptide at 1–27 (MATVRKAFPQRLVGLASLRAASTSSMG) directs the protein to the mitochondrion. In terms of domain architecture, Pyruvate carboxyltransferase spans 33–300 (VKIVEVGPRD…HTGVNLQKLL (268 aa)). Substrate is bound at residue Arg-41. Asp-42 provides a ligand contact to a divalent metal cation. Lys-48 bears the N6-acetyllysine; alternate mark. Lys-48 carries the post-translational modification N6-succinyllysine; alternate. Lys-111 carries the post-translational modification N6-acetyllysine. N6-acetyllysine; alternate is present on residues Lys-137 and Lys-179. N6-succinyllysine; alternate is present on residues Lys-137 and Lys-179. The a divalent metal cation site is built by His-233 and His-235. The active site involves Cys-266. Asn-275 provides a ligand contact to a divalent metal cation. A Microbody targeting signal motif is present at residues 323–325 (CKL). Position 324 is an N6-acetyllysine (Lys-324).

The protein belongs to the HMG-CoA lyase family. Homodimer; disulfide-linked. Can also form homotetramers. In terms of tissue distribution, in suckling rat, highest levels in liver and in intestine. Lower levels in heart, kidney and cerebellum. Weak expression in brain cortex, medulla and midbrain. Levels decrease slightly during weaning.

The protein resides in the mitochondrion matrix. The protein localises to the peroxisome. It catalyses the reaction (3S)-3-hydroxy-3-methylglutaryl-CoA = acetoacetate + acetyl-CoA. It functions in the pathway metabolic intermediate metabolism; (S)-3-hydroxy-3-methylglutaryl-CoA degradation; acetoacetate from (S)-3-hydroxy-3-methylglutaryl-CoA: step 1/1. In terms of biological role, mitochondrial 3-hydroxy-3-methylglutaryl-CoA lyase that catalyzes a cation-dependent cleavage of (S)-3-hydroxy-3-methylglutaryl-CoA into acetyl-CoA and acetoacetate, a key step in ketogenesis. Terminal step in leucine catabolism. Ketone bodies (beta-hydroxybutyrate, acetoacetate and acetone) are essential as an alternative source of energy to glucose, as lipid precursors and as regulators of metabolism. This chain is Hydroxymethylglutaryl-CoA lyase, mitochondrial (Hmgcl), found in Rattus norvegicus (Rat).